Reading from the N-terminus, the 1746-residue chain is tRNA (32-2'-O)-methyltransferase regulator THADA (1746 aa).

Positions 1252 to 1286 (EQALAEIRRIVVELKALQLRLKNTEAANTKLNTNV) form a coiled coil.

This sequence belongs to the THADA family. In terms of assembly, interacts with SERCA. Detected in the larval fat body, salivary glands and wing imaginal disks (at protein level).

It localises to the endoplasmic reticulum. In terms of biological role, together with methyltransferase Trm7-32, methylates the 2'-O-ribose of nucleotides at position 32 of the anticodon loop of substrate tRNAs. Plays a key role in energy homeostasis by regulating the balance between energy storage and heat production. Functions by negatively regulating Ca(2+) signaling pathways that are involved in heat production and maintaining correct lipid storage in the fat body. Regulates Ca(2+) signaling pathways by reducing the activity of the calcium-transporting ATPase SERCA possibly by promoting uncoupling of SERCA ATP hydrolysis from calcium pumping. May also function in the nervous system to control feeding behavior. The chain is tRNA (32-2'-O)-methyltransferase regulator THADA from Drosophila melanogaster (Fruit fly).